Reading from the N-terminus, the 392-residue chain is L-serine phosphate decarboxylase (392 aa).

The segment at 22–29 (NAGSHSPS) is required for catalytic activity. Asparagine 180 serves as a coordination point for O-phospho-L-serine. At lysine 243 the chain carries N6-(pyridoxal phosphate)lysine. Positions 354 and 368 each coordinate O-phospho-L-serine.

Belongs to the class-II pyridoxal-phosphate-dependent aminotransferase family. As to quaternary structure, homodimer. Requires pyridoxal 5'-phosphate as cofactor.

The enzyme catalyses O-phospho-L-serine + H(+) = phosphoethanolamine + CO2. Its pathway is cofactor biosynthesis. Functionally, pyridoxal phosphate (PLP)-dependent decarboxylase involved in the biosynthesis of norcobamides, cofactors in the tetrachloroethene reductive dehalogenase PceA of S.multivorans. Catalyzes the decarboxylation of L-serine O-phosphate to ethanolamine O-phosphate, the precursor for the linkage between the nucleotide loop and the corrin ring in norcobamide. Less active with L-threonine phosphate. No activity with L-serine or L-threonine. Has no aminotransferase activity as no production of L-glutamate with L-histidinol phosphate and 2-oxoglutarate as substrates. Complements growth defects in the S.enterica cobD deletion mutant, but of the cobamides, the norpseudo-vitamin B12 (norpseudo-B12) rather than the pseudo-B12 is produced in the mutant. However, addition of L-threonine phosphate to the culture minimal medium of the mutant results in formation of also the pseudo-B12, indicating the dual substrate specificity of this enzyme. This is L-serine phosphate decarboxylase from Sulfurospirillum multivorans (strain DM 12446 / JCM 15788 / NBRC 109480).